Here is a 466-residue protein sequence, read N- to C-terminus: Phosphoenolpyruvate carboxykinase (ATP) (466 aa).

Substrate-binding residues include R61, Y196, and K202. ATP is bound by residues K202, H221, and 237–245 (GLSGTGKTT). Residues K202 and H221 each contribute to the Mn(2+) site. D258 is a Mn(2+) binding site. Residues E286, R323, and T448 each coordinate ATP. A substrate-binding site is contributed by R323.

It belongs to the phosphoenolpyruvate carboxykinase (ATP) family. Requires Mn(2+) as cofactor.

It localises to the cytoplasm. The catalysed reaction is oxaloacetate + ATP = phosphoenolpyruvate + ADP + CO2. The protein operates within carbohydrate biosynthesis; gluconeogenesis. Its function is as follows. Involved in the gluconeogenesis. Catalyzes the conversion of oxaloacetate (OAA) to phosphoenolpyruvate (PEP) through direct phosphoryl transfer between the nucleoside triphosphate and OAA. This is Phosphoenolpyruvate carboxykinase (ATP) from Deinococcus radiodurans (strain ATCC 13939 / DSM 20539 / JCM 16871 / CCUG 27074 / LMG 4051 / NBRC 15346 / NCIMB 9279 / VKM B-1422 / R1).